We begin with the raw amino-acid sequence, 154 residues long: Probable transport accessory protein MmpS4 (154 aa).

Transmembrane regions (helical) follow at residues 19–39 (IWIP…VYRV) and 97–117 (QLPW…NLVA).

Belongs to the MmpS family.

It is found in the cell membrane. The polypeptide is Probable transport accessory protein MmpS4 (Mycobacterium leprae (strain TN)).